The sequence spans 238 residues: Uridylate kinase (238 aa).

An ATP-binding site is contributed by 12-15; it reads KLSG. G54 provides a ligand contact to UMP. Positions 55 and 59 each coordinate ATP. Residues D74 and 135-142 contribute to the UMP site; that span reads TGNPFFTT. T162, Y168, and D171 together coordinate ATP.

It belongs to the UMP kinase family. Homohexamer.

It is found in the cytoplasm. The catalysed reaction is UMP + ATP = UDP + ADP. It participates in pyrimidine metabolism; CTP biosynthesis via de novo pathway; UDP from UMP (UMPK route): step 1/1. With respect to regulation, inhibited by UTP. Functionally, catalyzes the reversible phosphorylation of UMP to UDP. This chain is Uridylate kinase, found in Methylobacillus flagellatus (strain ATCC 51484 / DSM 6875 / VKM B-1610 / KT).